Here is a 395-residue protein sequence, read N- to C-terminus: S-adenosylmethionine synthase (395 aa).

His-16 lines the ATP pocket. Mg(2+) is bound at residue Asp-18. A K(+)-binding site is contributed by Glu-44. L-methionine is bound by residues Glu-57 and Gln-100. The flexible loop stretch occupies residues 100 to 110 (QSPDIAQGVDR). ATP contacts are provided by residues 167–169 (DAK), 233–234 (RF), Asp-242, 248–249 (RK), Ala-265, and Lys-269. Residue Asp-242 coordinates L-methionine. Lys-273 lines the L-methionine pocket.

This sequence belongs to the AdoMet synthase family. Homotetramer; dimer of dimers. Mg(2+) serves as cofactor. K(+) is required as a cofactor.

The protein resides in the cytoplasm. It catalyses the reaction L-methionine + ATP + H2O = S-adenosyl-L-methionine + phosphate + diphosphate. It functions in the pathway amino-acid biosynthesis; S-adenosyl-L-methionine biosynthesis; S-adenosyl-L-methionine from L-methionine: step 1/1. Its function is as follows. Catalyzes the formation of S-adenosylmethionine (AdoMet) from methionine and ATP. The overall synthetic reaction is composed of two sequential steps, AdoMet formation and the subsequent tripolyphosphate hydrolysis which occurs prior to release of AdoMet from the enzyme. This is S-adenosylmethionine synthase from Burkholderia cenocepacia (strain ATCC BAA-245 / DSM 16553 / LMG 16656 / NCTC 13227 / J2315 / CF5610) (Burkholderia cepacia (strain J2315)).